A 264-amino-acid chain; its full sequence is Phosphoribosylaminoimidazole-succinocarboxamide synthase (264 aa).

Belongs to the SAICAR synthetase family.

It carries out the reaction 5-amino-1-(5-phospho-D-ribosyl)imidazole-4-carboxylate + L-aspartate + ATP = (2S)-2-[5-amino-1-(5-phospho-beta-D-ribosyl)imidazole-4-carboxamido]succinate + ADP + phosphate + 2 H(+). The protein operates within purine metabolism; IMP biosynthesis via de novo pathway; 5-amino-1-(5-phospho-D-ribosyl)imidazole-4-carboxamide from 5-amino-1-(5-phospho-D-ribosyl)imidazole-4-carboxylate: step 1/2. The chain is Phosphoribosylaminoimidazole-succinocarboxamide synthase (purC) from Synechocystis sp. (strain ATCC 27184 / PCC 6803 / Kazusa).